Reading from the N-terminus, the 256-residue chain is tRNA (guanine-N(7)-)-methyltransferase (256 aa).

Residues 17-45 (TCETVPGLPQKKHYRQRAHSNPHSDHDIE) are disordered. A compositionally biased stretch (basic residues) spans 26–36 (QKKHYRQRAHS). Residues glycine 74, 97–98 (EI), 132–133 (NA), and leucine 152 each bind S-adenosyl-L-methionine. Residue aspartate 155 is part of the active site. Position 230–232 (230–232 (TEE)) interacts with S-adenosyl-L-methionine.

Belongs to the class I-like SAM-binding methyltransferase superfamily. TrmB family.

The protein localises to the nucleus. The catalysed reaction is guanosine(46) in tRNA + S-adenosyl-L-methionine = N(7)-methylguanosine(46) in tRNA + S-adenosyl-L-homocysteine. It functions in the pathway tRNA modification; N(7)-methylguanine-tRNA biosynthesis. Its function is as follows. Catalyzes the formation of N(7)-methylguanine at position 46 (m7G46) in tRNA. This Caenorhabditis elegans protein is tRNA (guanine-N(7)-)-methyltransferase.